An 861-amino-acid polypeptide reads, in one-letter code: MAEILLTSVINKSVEIAGNLLIQEGKRLYWLKEDIDWLQREMRHIRSYVDNAKAKEAGGDSRVKNLLKDIQELAGDVEDLLDDFLPKIQQSNKFNYCLKRSSFADEFAMEIEKIKRRVVDIDRIRKTYNIIDTDNNNDDCVLLDRRRLFLHADETEIIGLDDDFNMLQAKLLNQDLHYGVVSIVGMPGLGKTTLAKKLYRLIRDQFECSGLVYVSQQPRASEILLDIAKQIGLTEQKMKENLEDNLRSLLKIKRYVFLLDDIWDVEIWDDLKLVLPECDSKVGSRIIITSRNSNVGRYIGGESSLHALQPLESEKSFELFTKKIFNFDDNNSWANASPDLVNIGRNIVGRCGGIPLAIVVTAGMLRARERTEHAWNRVLESMGHKVQDGCAKVLALSYNDLPIASRPCFLYFGLYPEDHEIRAFDLINMWIAEKFIVVNSGNRREAEDLAEDVLNDLVSRNLIQLAKRTYNGRISSCRIHDLLHSLCVDLAKESNFFHTAHDAFGDPGNVARLRRITFYSDNVMIEFFRSNPKLEKLRVLFCFAKDPSIFSHMAYFDFKLLHTLVVVMSQSFQAYVTIPSKFGNMTCLRYLRLEGNICGKLPNSIVKLTRLETIDIDRRSLIQPPSGVWESKHLRHLCYRDYGQACNSCFSISSFYPNIYSLHPNNLQTLMWIPDKFFEPRLLHRLINLRKLGILGVSNSTVKMLSIFSPVLKALEVLKLSFSSDPSEQIKLSSYPHIAKLHLNVNRTMALNSQSFPPNLIKLTLANFTVDRYILAVLKTFPKLRKLKMFICKYNEEKMDLSGEANGYSFPQLEVLHIHSPNGLSEVTCTDDVSMPKLKKLLLTGFHCRISLSERLKKLSK.

Positions 63–83 (VKNLLKDIQELAGDVEDLLDD) form a coiled coil. Positions 162 to 388 (DDFNMLQAKL…LESMGHKVQD (227 aa)) constitute an NB-ARC domain. 185 to 192 (GMPGLGKT) contacts ATP. LRR repeat units lie at residues 225-248 (LDIAKQIGLTEQKMKENLEDNLRS), 305-327 (LHALQPLESEKSFELFTKKIFNF), 388-411 (DGCAKVLALSYNDLPIASRPCFLY), 449-472 (LAEDVLNDLVSRNLIQLAKRTYNG), 510-536 (VARLRRITFYSDNVMIEFFRSNPKLEK), 585-608 (MTCLRYLRLEGNICGKLPNSIVKL), 609-631 (TRLETIDIDRRSLIQPPSGVWES), 652-680 (ISSFYPNIYSLHPNNLQTLMWIPDKFFEP), 689-710 (LRKLGILGVSNSTVKMLSIFSP), 712-735 (LKALEVLKLSFSSDPSEQIKLSSY), 736-758 (PHIAKLHLNVNRTMALNSQSFPP), 784-810 (LRKLKMFICKYNEEKMDLSGEANGYSF), and 811-835 (PQLEVLHIHSPNGLSEVTCTDDVSM).

It belongs to the disease resistance NB-LRR family. As to quaternary structure, (Microbial infection) Interacts with tobamoviruses mouvement protein at the plasma membrane; this interaction triggers defense responses leading to programmed cell death. In terms of assembly, binds to HSP90 proteins; this interaction seems required for defense responses toward tobamoviruses.

It localises to the cell membrane. Its function is as follows. Inhibitor of viral mouvements which confers resistance to some tobamoviruses including tomato mosaic virus (ToMV) (e.g. isolates L, W3 and SL-1) and tobacco mosaic virus (TMV), but not to resistance-breaking isolates (e.g. B7, LT1, LII, Ltbl, ToMV2, and ToMV1-2) ToMV and tomato brown rugose fruit virus (ToBRFV). Elicits a hypersensitive reaction in response to avirulent (Avr) movement proteins from resistance inducing tobamoviruses (e.g. ToMV and TMV) strains, thus leading to programmed cell death. The protein is ToMV resistance protein Tm-2(GCR236) of Solanum lycopersicum (Tomato).